A 3678-amino-acid chain; its full sequence is Dystrophin (3678 aa).

Residues 1–240 (MLWWEEVEDC…YITSLFQVLP (240 aa)) form an actin-binding region. Calponin-homology (CH) domains are found at residues 15 to 119 (DVQK…LHWQ) and 134 to 240 (TNSE…QVLP). Residues 63-72 (PKEKGSTRVH) form an ANK2- and ANK-3 binding region. The interval 313–333 (DSTQSPYPSQHLEAPRDKSLD) is disordered. Spectrin repeat units lie at residues 341 to 449 (VNLD…KLHK), 450 to 558 (VLMD…VLQD), 561 to 669 (LKWQ…QISQ), 721 to 830 (ELRK…WLEY), 832 to 936 (TNII…ELQT), 945 to 1047 (RYQE…KLEE), 1050 to 1156 (NKLR…ALKA), 1159 to 1265 (DKTV…TLEE), 1268 to 1369 (ACWH…LLEQ), 1370 to 1465 (SIQS…LFQK), 1470 to 1570 (EQRL…QLEK), 1573 to 1678 (KLSR…LLLE), 1681 to 1780 (KHME…KASI), 1781 to 1876 (PLKE…KALE), 1879 to 1981 (HQWY…TLHE), 1994 to 2103 (DVSY…RFDR), 2106 to 2210 (EKWR…RIEE), 2213 to 2318 (NVLS…ELEV), 2319 to 2416 (HLKD…LRTK), 2468 to 2570 (FNRA…QLNE), 2573 to 2679 (KDST…ALEE), 2682 to 2795 (RLLQ…HLEA), 2801 to 2923 (KRLH…RKID), and 2928 to 3033 (RLQE…QLHE). Residues 1417-1915 (SDLTSHEISL…PEPRDERKLK (499 aa)) form an interaction with SYNM region. The WW domain occupies 3048 to 3081 (TSVQGPWERAISPNKVPYYINHETQTTCWDHPKM). Residues 3051–3401 (QGPWERAISP…TVLEGDNMET (351 aa)) are interaction with SYNM. Residues 3301–3357 (KHQAKCNICKECPIIGFRYRSLKHFNYDICQSCFFSGRVAKGHKMHYPMVEYCTPTT) form a ZZ-type; degenerate zinc finger. The Zn(2+) site is built by C3306, C3309, C3330, and C3333. Residues 3459–3511 (DDEHLLIQHYCQSLNQDSPLSQPRSPAQILISLESEERGELERILADLEEENR) form a binds to SNTB1 region. 3 positions are modified to phosphoserine: S3476, S3483, and S3493. Disordered regions lie at residues 3521–3547 (KQQHEHKGLSPLPSPPEMMPTSPQSPR) and 3596–3678 (EAKV…EDTM). Composition is skewed to polar residues over residues 3600–3619 (NGTTVSSPSTSLQRSDSSQP) and 3655–3665 (QLNNSFPSSRG). Residues S3605, S3606, S3610, S3616, S3617, and S3659 each carry the phosphoserine modification.

In terms of assembly, interacts with SYNM. Interacts with the syntrophins SNTG1 and SNTG2. Interacts with KRT19. Component of the dystrophin-associated glycoprotein complex which is composed of three subcomplexes: a cytoplasmic complex comprised of DMD (or UTRN), DTNA and a number of syntrophins, such as SNTB1, SNTB2, SNTG1 and SNTG2, the transmembrane dystroglycan complex, and the sarcoglycan-sarcospan complex. Interacts with DAG1 (betaDAG1) with DMD; the interaction is inhibited by phosphorylation on the PPXY motif of DAG1. Interacts with SYNM; SNTA1 and SNTB1. Interacts with CMYA5. Directly interacts with ANK2 and ANK3; these interactions do not interfere with betaDAG1-binding and are necessary for proper localization in muscle cells. Identified in a dystroglycan complex that contains at least PRX, DRP2, UTRN, DMD and DAG1. Interacts with DTNB. Interacts with PGM5; the interaction is direct. Interacts with NOS1; localizes NOS1 to sarcolemma in muscle cells. Detected in quadriceps muscle and in sciatic nerve (at protein level). Expressed in the sarcolemma of the soleus muscle (at protein level). Differentially expressed during skeletal muscle, heart, and brain development. Also expressed in retina.

The protein localises to the cell membrane. The protein resides in the sarcolemma. Its subcellular location is the cytoplasm. It is found in the cytoskeleton. It localises to the postsynaptic cell membrane. In terms of biological role, anchors the extracellular matrix to the cytoskeleton via F-actin. Ligand for dystroglycan. Component of the dystrophin-associated glycoprotein complex which accumulates at the neuromuscular junction (NMJ) and at a variety of synapses in the peripheral and central nervous systems and has a structural function in stabilizing the sarcolemma. Also implicated in signaling events and synaptic transmission. The protein is Dystrophin (Dmd) of Mus musculus (Mouse).